The chain runs to 288 residues: METQLVISDVLFGNTEEKQKPLTVNELNTIQPVAFMRLGLFVPKPSRSSDYSPMIDVSELSSTFEFARLEGFTDIKITGERLDMDTDFKVWIGIVKAFSKYGISSNRIKLKFSEFAKDCGFPGKKLDKKLRAHIDESLRKIRGKSISFKRGKDSQSAYHTGLIKIAYFNADTDVVELEADERLWELYYFDYRVVLQLHAIKALPRLEVAQALYTFLASLPSNPAPISFERLRERLSLISQVKEQNRIIKKAITKLIDIGNLDASMVKKGQENYLIIHKRSPKLSVINE.

It belongs to the initiator RepB protein family.

In terms of biological role, this protein is essential for plasmid replication; it is involved in copy control functions. This chain is Protein RepA (repA), found in Escherichia coli.